Reading from the N-terminus, the 304-residue chain is Glutaminase (304 aa).

Residues Ser-63, Asn-113, Glu-157, Asn-164, Tyr-188, Tyr-240, and Val-258 each contribute to the substrate site.

Belongs to the glutaminase family. In terms of assembly, homotetramer.

It carries out the reaction L-glutamine + H2O = L-glutamate + NH4(+). This Ralstonia nicotianae (strain ATCC BAA-1114 / GMI1000) (Ralstonia solanacearum) protein is Glutaminase.